A 181-amino-acid chain; its full sequence is Protein Syd (181 aa).

The protein belongs to the Syd family.

Its subcellular location is the cell inner membrane. Its function is as follows. Interacts with the SecY protein in vivo. May bind preferentially to an uncomplexed state of SecY, thus functioning either as a chelating agent for excess SecY in the cell or as a regulatory factor that negatively controls the translocase function. This Salmonella arizonae (strain ATCC BAA-731 / CDC346-86 / RSK2980) protein is Protein Syd.